Consider the following 293-residue polypeptide: Methylsterol monooxygenase 1 (293 aa).

A run of 2 helical transmembrane segments spans residues 55–75 (LIVHEALYFLFCLPGFLFQFI) and 100–120 (VLLFNHFCIQLPLICGTYYFT). The Fatty acid hydroxylase domain occupies 145–274 (CAVIEDTWHY…FTWWDRIFGT (130 aa)). The Histidine box-1 signature appears at 157 to 161 (HRLLH). The Histidine box-2 motif lies at 170–174 (HKVHH). A helical transmembrane segment spans residues 199-219 (FFIGIVLLCDHVILLWAWVTI). The short motif at 249–255 (HHDFHHM) is the Histidine box-3 element.

This sequence belongs to the sterol desaturase family. The cofactor is Fe cation. Ubiquitinated by MARCHF6, leading to proteasomal degradation.

It is found in the endoplasmic reticulum membrane. It catalyses the reaction 4,4-dimethyl-5alpha-cholest-7-en-3beta-ol + 6 Fe(II)-[cytochrome b5] + 3 O2 + 5 H(+) = 4alpha-carboxy-4beta-methyl-5alpha-cholest-7-ene-3beta-ol + 6 Fe(III)-[cytochrome b5] + 4 H2O. It carries out the reaction 4,4-dimethyl-5alpha-cholesta-8,24-dien-3beta-ol + 6 Fe(II)-[cytochrome b5] + 3 O2 + 5 H(+) = 4beta-methylzymosterol-4alpha-carboxylate + 6 Fe(III)-[cytochrome b5] + 4 H2O. The enzyme catalyses 4alpha-methylzymosterol + 6 Fe(II)-[cytochrome b5] + 3 O2 + 5 H(+) = 4alpha-carboxyzymosterol + 6 Fe(III)-[cytochrome b5] + 4 H2O. The catalysed reaction is 4alpha-methyl-5alpha-cholest-7-en-3beta-ol + 6 Fe(II)-[cytochrome b5] + 3 O2 + 5 H(+) = 4alpha-carboxy-5alpha-cholest-7-en-3beta-ol + 6 Fe(III)-[cytochrome b5] + 4 H2O. It catalyses the reaction 4,4-dimethyl-5alpha-cholest-8-en-3beta-ol + 6 Fe(II)-[cytochrome b5] + 3 O2 + 5 H(+) = 4alpha-carboxy-4beta-methyl-5alpha-cholest-8-en-3beta-ol + 6 Fe(III)-[cytochrome b5] + 4 H2O. It carries out the reaction 4alpha-methyl-5alpha-cholest-8-en-3beta-ol + 6 Fe(II)-[cytochrome b5] + 3 O2 + 5 H(+) = 4alpha-carboxy-5alpha-cholest-8-ene-3beta-ol + 6 Fe(III)-[cytochrome b5] + 4 H2O. The protein operates within steroid biosynthesis; zymosterol biosynthesis; zymosterol from lanosterol: step 3/6. It functions in the pathway steroid biosynthesis; cholesterol biosynthesis. Its function is as follows. Catalyzes the three-step monooxygenation required for the demethylation of 4,4-dimethyl and 4alpha-methylsterols, which can be subsequently metabolized to cholesterol. This Pongo abelii (Sumatran orangutan) protein is Methylsterol monooxygenase 1 (MSMO1).